The chain runs to 679 residues: Glycine--tRNA ligase beta subunit (679 aa).

This sequence belongs to the class-II aminoacyl-tRNA synthetase family. As to quaternary structure, tetramer of two alpha and two beta subunits.

The protein localises to the cytoplasm. The enzyme catalyses tRNA(Gly) + glycine + ATP = glycyl-tRNA(Gly) + AMP + diphosphate. The polypeptide is Glycine--tRNA ligase beta subunit (Streptococcus gordonii (strain Challis / ATCC 35105 / BCRC 15272 / CH1 / DL1 / V288)).